The primary structure comprises 99 residues: uncharacterized protein (99 aa).

Disordered stretches follow at residues 1-24 (MKAT…VRAT) and 49-99 (SVRT…RCAT). 2 stretches are compositionally biased toward basic residues: residues 15–24 (VRRRRRVRAT) and 71–81 (SRRRGRPRSSR).

This is an uncharacterized protein from Streptomyces fradiae (Streptomyces roseoflavus).